Reading from the N-terminus, the 158-residue chain is MAKSNYITRSGWNALDQELKFLWKDERPKVTQAVSDAAALGDRSENAEYIYGKRRLREIDRRVRFLTKRLEVLQIVDYHPKQEGKVFFGAWVALENEAGEEKHYRIVGCDEFDPAKNWISIDSPVARALIGKSIDDEIKVETPSGLVILYINQIWYEK.

Residues Lys53–Ile75 are a coiled coil.

This sequence belongs to the GreA/GreB family. GreB subfamily.

Its function is as follows. Necessary for efficient RNA polymerase transcription elongation past template-encoded arresting sites. The arresting sites in DNA have the property of trapping a certain fraction of elongating RNA polymerases that pass through, resulting in locked ternary complexes. Cleavage of the nascent transcript by cleavage factors such as GreA or GreB allows the resumption of elongation from the new 3'terminus. GreB releases sequences of up to 9 nucleotides in length. The chain is Transcription elongation factor GreB from Pasteurella multocida (strain Pm70).